The primary structure comprises 84 residues: Large ribosomal subunit protein bL27 (84 aa).

The segment at 1-25 is disordered; sequence MAHKKGAGSTKNGRDSKPKMLGVKR.

Belongs to the bacterial ribosomal protein bL27 family.

The protein is Large ribosomal subunit protein bL27 of Dehalococcoides mccartyi (strain ATCC BAA-2266 / KCTC 15142 / 195) (Dehalococcoides ethenogenes (strain 195)).